The primary structure comprises 333 residues: L-lactate dehydrogenase A chain (333 aa).

A2 is modified (N-acetylalanine). NAD(+) is bound by residues 30–58 (GAVG…MEDK) and R100. Residues R107, N139, and R170 each contribute to the substrate site. Residue N139 coordinates NAD(+). H194 functions as the Proton acceptor in the catalytic mechanism. Residue T249 participates in substrate binding.

Belongs to the LDH/MDH superfamily. LDH family. As to quaternary structure, homotetramer.

It localises to the cytoplasm. The catalysed reaction is (S)-lactate + NAD(+) = pyruvate + NADH + H(+). It participates in fermentation; pyruvate fermentation to lactate; (S)-lactate from pyruvate: step 1/1. In terms of biological role, interconverts simultaneously and stereospecifically pyruvate and lactate with concomitant interconversion of NADH and NAD(+). This Squalus acanthias (Spiny dogfish) protein is L-lactate dehydrogenase A chain (ldha).